Here is a 792-residue protein sequence, read N- to C-terminus: Phosphoenolpyruvate synthase (792 aa).

Residue His-421 is the Tele-phosphohistidine intermediate of the active site. Substrate is bound by residues Arg-511, Arg-578, Glu-680, Gly-701, Ser-702, Asn-703, and Asp-704. Position 680 (Glu-680) interacts with Mg(2+). Residue Asp-704 coordinates Mg(2+). The Proton donor role is filled by Cys-751.

Belongs to the PEP-utilizing enzyme family. Homodimer. Mg(2+) serves as cofactor.

It carries out the reaction pyruvate + ATP + H2O = phosphoenolpyruvate + AMP + phosphate + 2 H(+). It functions in the pathway carbohydrate biosynthesis; gluconeogenesis. Its activity is regulated as follows. Activated by a Pi-dependent pyrophosphorylation and inactivated by an ADP-dependent phosphorylation on a regulatory threonine. Both reactions are mediated by the bifunctional serine/threonine kinase and phosphorylase PpsR. Its function is as follows. Catalyzes the phosphorylation of pyruvate to phosphoenolpyruvate. This chain is Phosphoenolpyruvate synthase (ppsA), found in Escherichia coli (strain K12).